A 161-amino-acid polypeptide reads, in one-letter code: UPF0225 protein HI_0277 (161 aa).

The protein belongs to the UPF0225 family.

The chain is UPF0225 protein HI_0277 from Haemophilus influenzae (strain ATCC 51907 / DSM 11121 / KW20 / Rd).